The chain runs to 605 residues: METPQMNAIQEEDNLSPEVAFQTPKLNDSDASSFSLSNMNAVGNVDGIPSQNRTFFASPRPSSLFYSAKEGNNSSSSIIYNPSFTFGENASSNANINEAALMKGKGNEGRRQSLKYIPAPKLVPPPPRTRSPVRGISPDAGSSKRSSMTLDSPFNFTTSTLQPHQQTPPSSAASRTSFRKGHRYKHSSVSMNFFQEPEVKIPLNIAKSLPIPDFNDLLSNLPWPKAYIQLSIAALQIFACLITFQVGHLYSWSNFITLSHFITYDIIGSLVIIFVENLSQFQVWFTGTITFPFGLNRIDVLLSFALAVSLCFVGLDLLFHIIEEFIVLFVESGSSLTNNHDHDEINEQIPHSHIANANDSQNENITLWYSILMINLVLSTLSLYKTFYANKYSNLKTKNPIITITYTAYLFIYPLLLDLLSSISDYLATLVISSLILWHGLTIARWTSTVLLMGFSTTSLSNSALFNNNDSTDTTAHTQQVESKAAKEKPSVRPRSMSSLPIATKNTKIRKTGFLNSAGFTENPTTIKNMIKDQIERLSEFKSRYILNYDDIVISKVNFTLYVVLIKITMKGGSDDDELMLRLAIDKCIQTSIPTCETTIDIDRI.

Topologically, residues 1–225 are cytoplasmic; that stretch reads METPQMNAIQ…DLLSNLPWPK (225 aa). A phosphoserine mark is found at S16 and S131. A disordered region spans residues 118-178; it reads PAPKLVPPPP…PSSAASRTSF (61 aa). Residues 143–176 are compositionally biased toward polar residues; the sequence is SKRSSMTLDSPFNFTTSTLQPHQQTPPSSAASRT. Residues 226–246 traverse the membrane as a helical segment; it reads AYIQLSIAALQIFACLITFQV. Residues 247–254 lie on the Lumenal side of the membrane; sequence GHLYSWSN. The chain crosses the membrane as a helical span at residues 255–275; that stretch reads FITLSHFITYDIIGSLVIIFV. Residues 276-287 lie on the Cytoplasmic side of the membrane; the sequence is ENLSQFQVWFTG. The chain crosses the membrane as a helical span at residues 288–308; it reads TITFPFGLNRIDVLLSFALAV. S309 is a topological domain (lumenal). Residues 310 to 330 traverse the membrane as a helical segment; the sequence is LCFVGLDLLFHIIEEFIVLFV. At 331-363 the chain is on the cytoplasmic side; the sequence is ESGSSLTNNHDHDEINEQIPHSHIANANDSQNE. The chain crosses the membrane as a helical span at residues 364–384; that stretch reads NITLWYSILMINLVLSTLSLY. Topologically, residues 385-399 are lumenal; the sequence is KTFYANKYSNLKTKN. The chain crosses the membrane as a helical span at residues 400–420; it reads PIITITYTAYLFIYPLLLDLL. Over 421–422 the chain is Cytoplasmic; that stretch reads SS. The chain crosses the membrane as a helical span at residues 423 to 443; that stretch reads ISDYLATLVISSLILWHGLTI. The Lumenal portion of the chain corresponds to 444–545; that stretch reads ARWTSTVLLM…ERLSEFKSRY (102 aa). Over residues 473–482 the composition is skewed to polar residues; that stretch reads DTTAHTQQVE. The tract at residues 473–497 is disordered; the sequence is DTTAHTQQVESKAAKEKPSVRPRSM. At S498 the chain carries Phosphoserine. Residues 546–566 form a helical membrane-spanning segment; sequence ILNYDDIVISKVNFTLYVVLI. The Cytoplasmic portion of the chain corresponds to 567-605; it reads KITMKGGSDDDELMLRLAIDKCIQTSIPTCETTIDIDRI.

Its subcellular location is the endoplasmic reticulum membrane. This Saccharomyces cerevisiae (strain ATCC 204508 / S288c) (Baker's yeast) protein is Protein ZRG17 (ZRG17).